We begin with the raw amino-acid sequence, 505 residues long: tRNA-2-methylthio-N(6)-dimethylallyladenosine synthase (505 aa).

One can recognise an MTTase N-terminal domain in the interval 14–132; it reads RTYEVRTYGC…LPVLLERARV (119 aa). Positions 23, 61, 95, 169, 173, and 176 each coordinate [4Fe-4S] cluster. A Radical SAM core domain is found at 155-386; that stretch reads RESAYAAWVS…ALQEEISWEE (232 aa). One can recognise a TRAM domain in the interval 388–456; sequence KKQVGRTLEL…PHHLLAEGPV (69 aa).

It belongs to the methylthiotransferase family. MiaB subfamily. As to quaternary structure, monomer. It depends on [4Fe-4S] cluster as a cofactor.

Its subcellular location is the cytoplasm. The catalysed reaction is N(6)-dimethylallyladenosine(37) in tRNA + (sulfur carrier)-SH + AH2 + 2 S-adenosyl-L-methionine = 2-methylsulfanyl-N(6)-dimethylallyladenosine(37) in tRNA + (sulfur carrier)-H + 5'-deoxyadenosine + L-methionine + A + S-adenosyl-L-homocysteine + 2 H(+). Catalyzes the methylthiolation of N6-(dimethylallyl)adenosine (i(6)A), leading to the formation of 2-methylthio-N6-(dimethylallyl)adenosine (ms(2)i(6)A) at position 37 in tRNAs that read codons beginning with uridine. The chain is tRNA-2-methylthio-N(6)-dimethylallyladenosine synthase from Streptomyces viridosporus (strain ATCC 14672 / DSM 40746 / JCM 4963 / KCTC 9882 / NRRL B-12104 / FH 1290) (Streptomyces ghanaensis).